Here is a 93-residue protein sequence, read N- to C-terminus: Phosphoribosyl-ATP pyrophosphatase (93 aa).

This sequence belongs to the PRA-PH family.

Its subcellular location is the cytoplasm. The catalysed reaction is 1-(5-phospho-beta-D-ribosyl)-ATP + H2O = 1-(5-phospho-beta-D-ribosyl)-5'-AMP + diphosphate + H(+). It participates in amino-acid biosynthesis; L-histidine biosynthesis; L-histidine from 5-phospho-alpha-D-ribose 1-diphosphate: step 2/9. The polypeptide is Phosphoribosyl-ATP pyrophosphatase (Mycolicibacterium paratuberculosis (strain ATCC BAA-968 / K-10) (Mycobacterium paratuberculosis)).